A 152-amino-acid chain; its full sequence is Transcriptional regulator MraZ (152 aa).

SpoVT-AbrB domains are found at residues 5–52 and 81–124; these read ASAI…PIHE and AHEV…DEQA.

It belongs to the MraZ family. In terms of assembly, forms oligomers.

The protein resides in the cytoplasm. The protein localises to the nucleoid. This chain is Transcriptional regulator MraZ, found in Shewanella putrefaciens (strain CN-32 / ATCC BAA-453).